The sequence spans 301 residues: Polyamine aminopropyltransferase (301 aa).

Residues Trp-4–Val-240 form the PABS domain. Position 33 (Gln-33) interacts with S-methyl-5'-thioadenosine. Spermidine contacts are provided by His-64 and Glu-89. S-methyl-5'-thioadenosine contacts are provided by residues Asp-109 and Asp-141–Gly-142. Residue Asp-159 is the Proton acceptor of the active site.

Belongs to the spermidine/spermine synthase family. Homodimer or homotetramer.

Its subcellular location is the cytoplasm. It catalyses the reaction S-adenosyl 3-(methylsulfanyl)propylamine + putrescine = S-methyl-5'-thioadenosine + spermidine + H(+). It participates in amine and polyamine biosynthesis; spermidine biosynthesis; spermidine from putrescine: step 1/1. Its function is as follows. Catalyzes the irreversible transfer of a propylamine group from the amino donor S-adenosylmethioninamine (decarboxy-AdoMet) to putrescine (1,4-diaminobutane) to yield spermidine. The polypeptide is Polyamine aminopropyltransferase (Saccharolobus islandicus (strain L.S.2.15 / Lassen #1) (Sulfolobus islandicus)).